Reading from the N-terminus, the 163-residue chain is UPF0262 protein RPC_4416 (163 aa).

This sequence belongs to the UPF0262 family.

The chain is UPF0262 protein RPC_4416 from Rhodopseudomonas palustris (strain BisB18).